The sequence spans 107 residues: Acidic phospholipase A2 2 (107 aa).

6 disulfide bridges follow: Cys-26–Cys-100, Cys-28–Cys-38, Cys-37–Cys-82, Cys-43–Cys-107, Cys-44–Cys-75, and Cys-62–Cys-73. Ca(2+) is bound by residues Tyr-27, Gly-29, and Gly-31. Residue His-41 is part of the active site. Position 42 (Asp-42) interacts with Ca(2+). Asp-76 is a catalytic residue.

Ca(2+) is required as a cofactor. As to expression, expressed by the venom gland.

The protein localises to the secreted. The catalysed reaction is a 1,2-diacyl-sn-glycero-3-phosphocholine + H2O = a 1-acyl-sn-glycero-3-phosphocholine + a fatty acid + H(+). Functionally, PLA2 catalyzes the calcium-dependent hydrolysis of the 2-acyl groups in 3-sn-phosphoglycerides. The protein is Acidic phospholipase A2 2 of Bothrops insularis (Golden lancehead).